A 238-amino-acid polypeptide reads, in one-letter code: Ubiquinone biosynthesis O-methyltransferase (238 aa).

The S-adenosyl-L-methionine site is built by arginine 38, glycine 58, aspartate 79, and methionine 124.

It belongs to the methyltransferase superfamily. UbiG/COQ3 family.

The catalysed reaction is a 3-demethylubiquinol + S-adenosyl-L-methionine = a ubiquinol + S-adenosyl-L-homocysteine + H(+). It catalyses the reaction a 3-(all-trans-polyprenyl)benzene-1,2-diol + S-adenosyl-L-methionine = a 2-methoxy-6-(all-trans-polyprenyl)phenol + S-adenosyl-L-homocysteine + H(+). It functions in the pathway cofactor biosynthesis; ubiquinone biosynthesis. Its function is as follows. O-methyltransferase that catalyzes the 2 O-methylation steps in the ubiquinone biosynthetic pathway. The polypeptide is Ubiquinone biosynthesis O-methyltransferase (Acinetobacter baylyi (strain ATCC 33305 / BD413 / ADP1)).